A 517-amino-acid polypeptide reads, in one-letter code: ATP synthase subunit alpha 1 (517 aa).

176–183 (GDRQTGKT) provides a ligand contact to ATP.

It belongs to the ATPase alpha/beta chains family. In terms of assembly, F-type ATPases have 2 components, CF(1) - the catalytic core - and CF(0) - the membrane proton channel. CF(1) has five subunits: alpha(3), beta(3), gamma(1), delta(1), epsilon(1). CF(0) has three main subunits: a(1), b(2) and c(9-12). The alpha and beta chains form an alternating ring which encloses part of the gamma chain. CF(1) is attached to CF(0) by a central stalk formed by the gamma and epsilon chains, while a peripheral stalk is formed by the delta and b chains.

The protein localises to the cell inner membrane. It carries out the reaction ATP + H2O + 4 H(+)(in) = ADP + phosphate + 5 H(+)(out). In terms of biological role, produces ATP from ADP in the presence of a proton gradient across the membrane. The alpha chain is a regulatory subunit. The sequence is that of ATP synthase subunit alpha 1 from Shewanella frigidimarina (strain NCIMB 400).